The chain runs to 893 residues: Sperm-associated antigen 1 (893 aa).

A compositionally biased stretch (basic and acidic residues) spans 112–126; it reads ENTRHFHDPEKHPGV. The tract at residues 112–155 is disordered; sequence ENTRHFHDPEKHPGVEDPLPPVRGSNSCPRGGKETSSKSKTAKK. 3 TPR repeats span residues 213 to 246, 247 to 279, and 280 to 313; these read ANREKGKGNEAFYSGDYEEAVMYYTRSLSALPTA, TAYNNRAQAEIKLQRWSSALEDCEKALELEPGN, and IKALLRRATTYKHQNKFLEAVDDLRKVLQAEPDN. Disordered stretches follow at residues 324-344, 349-368, and 373-437; these read ERELKNSEPASELQTKGKRMV, ENSGDEGGKGDEDDHEDDGV, and MGNI…SRGN. S351 is subject to Phosphoserine. Polar residues predominate over residues 403 to 415; it reads QEGQPETGTASTS. The segment covering 416–437 has biased composition (basic and acidic residues); the sequence is DNHDLEERRAADSPGDLKSRGN. 5 TPR repeats span residues 429 to 463, 471 to 504, 506 to 538, 605 to 638, and 639 to 672; these read PGDLKSRGNELFRGGQFAEAAVQYSGAIAQLEPTG, SILYSNRAACYLKEGNCRGCIQDCDRALELQPFA, KPLLRRAMAYETLEQYRSAYVDYITVLKIDCRI, FQALKEEGNQLVKDKNYKDAISKYNECLKINSKA, and CAIYTNRALCYLKLGQFEEAKLDCDKALQIDSKN. Residue 630-637 participates in GTP binding; it reads ECLKINSK. S703 carries the phosphoserine modification. Residues 704–756 are disordered; that stretch reads PDSSEAARHLDTKNDTAPPSRERERRRIEIQEVDDSSDEEPERPAEASAVEEG. Residues 708-733 are compositionally biased toward basic and acidic residues; it reads EAARHLDTKNDTAPPSRERERRRIEI. Positions 734–744 are enriched in acidic residues; it reads QEVDDSSDEEP. Phosphoserine occurs at positions 739, 740, and 758.

As to expression, testis and sperm.

It localises to the cytoplasm. Its subcellular location is the dynein axonemal particle. Functionally, may play a role in the cytoplasmic assembly of the ciliary dynein arms. Binds GTP and has GTPase activity. Plays a role in fertilization. The chain is Sperm-associated antigen 1 (Spag1) from Rattus norvegicus (Rat).